The chain runs to 780 residues: Semaphorin-3G (780 aa).

The signal sequence occupies residues 1–22; that stretch reads MDPSAWAICCLLGSLLFHVGIP. Residues 32-519 form the Sema domain; that stretch reads RLRLSYRDLL…SPLGVARLQL (488 aa). N-linked (GlcNAc...) asparagine glycosylation occurs at N44. An intrachain disulfide couples C105 to C116. N127 carries an N-linked (GlcNAc...) asparagine glycan. Intrachain disulfides connect C134-C143, C270-C382, C294-C342, C522-C540, and C603-C655. In terms of domain architecture, Ig-like C2-type spans 569-671; sequence PAVQCLGQGQ…FSQTVVRFAL (103 aa). Residue N652 is glycosylated (N-linked (GlcNAc...) asparagine).

It belongs to the semaphorin family. As to expression, highly expressed in lung and kidney. Weakly expressed in brain.

It localises to the secreted. In terms of biological role, has chemorepulsive activities for sympathetic axons. Ligand of NRP2. The protein is Semaphorin-3G (Sema3g) of Mus musculus (Mouse).